The chain runs to 427 residues: Light-independent protochlorophyllide reductase subunit N (427 aa).

[4Fe-4S] cluster-binding residues include Cys29, Cys54, and Cys115.

This sequence belongs to the BchN/ChlN family. As to quaternary structure, protochlorophyllide reductase is composed of three subunits; BchL, BchN and BchB. Forms a heterotetramer of two BchB and two BchN subunits. It depends on [4Fe-4S] cluster as a cofactor.

It carries out the reaction chlorophyllide a + oxidized 2[4Fe-4S]-[ferredoxin] + 2 ADP + 2 phosphate = protochlorophyllide a + reduced 2[4Fe-4S]-[ferredoxin] + 2 ATP + 2 H2O. The protein operates within porphyrin-containing compound metabolism; bacteriochlorophyll biosynthesis (light-independent). In terms of biological role, component of the dark-operative protochlorophyllide reductase (DPOR) that uses Mg-ATP and reduced ferredoxin to reduce ring D of protochlorophyllide (Pchlide) to form chlorophyllide a (Chlide). This reaction is light-independent. The NB-protein (BchN-BchB) is the catalytic component of the complex. This chain is Light-independent protochlorophyllide reductase subunit N, found in Bradyrhizobium sp. (strain ORS 278).